The primary structure comprises 157 residues: Thioredoxin 2 (157 aa).

The signal sequence occupies residues 1-22; it reads MKHILALVVFIISFFCFKDVNC. Positions 46 to 157 constitute a Thioredoxin domain; sequence LRMYNKMPRL…ELTSTIRKHL (112 aa). Catalysis depends on nucleophile residues Cys82 and Cys85. Residues Cys82 and Cys85 are joined by a disulfide bond.

It belongs to the thioredoxin family. As to quaternary structure, monomer. Component of the translocon PTEX complex composed of HSP101, EXP2, PTEX150, PTEX88 and TRX2. The disulfide bond between Cys-82 and Cys-85 acts as a redox-active center and is reduced by thioredoxin reductase TRXR.

In terms of biological role, participates in various redox reactions through the reversible oxidation of its active center dithiol to a disulfide and catalyzes dithiol-disulfide exchange reactions. As part of the translocon PTEX complex, plays a role in the export of parasite proteins into the host erythrocyte. The translocon PTEX complex is a multi-protein machinery resident in the parasite parasitophorous vacuolar membrane, responsible for protein secretion into host cells. May contribute to the unfolding of proteins containing the PEXEL localization motif before their passage through the translocon or regulate the PTEX complex function. The chain is Thioredoxin 2 from Plasmodium berghei (strain Anka).